The following is a 246-amino-acid chain: Large ribosomal subunit protein uL30 (246 aa).

Position 1 is an N-acetylmethionine (Met1). Repeat copies occupy residues 7 to 17, 18 to 28, 29 to 40, and 41 to 52. Positions 7–52 are 4 X 12 AA tandem repeats; it reads KKVPSVPESLLKRRQAYAAAKAKRLKRLLAQKKFRKAQRKIIYERA.

This sequence belongs to the universal ribosomal protein uL30 family. In terms of assembly, component of the large ribosomal subunit.

It is found in the cytoplasm. In terms of biological role, component of the large ribosomal subunit. The ribosome is a large ribonucleoprotein complex responsible for the synthesis of proteins in the cell. Binds to G-rich structures in 28S rRNA and in mRNAs. Plays a regulatory role in the translation apparatus; inhibits cell-free translation of mRNAs. This is Large ribosomal subunit protein uL30 (RPL7) from Gallus gallus (Chicken).